The primary structure comprises 401 residues: Argininosuccinate synthase (401 aa).

Position 8 to 16 (8 to 16 (AYSGGLDTS)) interacts with ATP. Tyr85 contacts L-citrulline. Gly115 contributes to the ATP binding site. L-aspartate contacts are provided by Thr117, Asn121, and Asp122. Asn121 provides a ligand contact to L-citrulline. L-citrulline contacts are provided by Arg125, Ser173, Glu258, and Tyr270.

Belongs to the argininosuccinate synthase family. Type 1 subfamily. In terms of assembly, homotetramer.

Its subcellular location is the cytoplasm. The catalysed reaction is L-citrulline + L-aspartate + ATP = 2-(N(omega)-L-arginino)succinate + AMP + diphosphate + H(+). The protein operates within amino-acid biosynthesis; L-arginine biosynthesis; L-arginine from L-ornithine and carbamoyl phosphate: step 2/3. This is Argininosuccinate synthase from Staphylococcus aureus (strain Mu3 / ATCC 700698).